The primary structure comprises 422 residues: uncharacterized protein (422 aa).

The interval M1 to S22 is disordered. Residues K7–S22 are compositionally biased toward low complexity.

This is an uncharacterized protein from Acanthamoeba polyphaga mimivirus (APMV).